The following is a 288-amino-acid chain: Probable endonuclease 4 (288 aa).

The Zn(2+) site is built by histidine 75, histidine 115, glutamate 153, aspartate 187, histidine 190, histidine 224, aspartate 237, histidine 239, and glutamate 269.

The protein belongs to the AP endonuclease 2 family. It depends on Zn(2+) as a cofactor.

It catalyses the reaction Endonucleolytic cleavage to 5'-phosphooligonucleotide end-products.. Its function is as follows. Endonuclease IV plays a role in DNA repair. It cleaves phosphodiester bonds at apurinic or apyrimidinic (AP) sites, generating a 3'-hydroxyl group and a 5'-terminal sugar phosphate. This chain is Probable endonuclease 4, found in Chlamydia trachomatis serovar A (strain ATCC VR-571B / DSM 19440 / HAR-13).